A 229-amino-acid chain; its full sequence is Protein-L-isoaspartate O-methyltransferase (229 aa).

Ser78 is a catalytic residue.

Belongs to the methyltransferase superfamily. L-isoaspartyl/D-aspartyl protein methyltransferase family.

It localises to the cytoplasm. It catalyses the reaction [protein]-L-isoaspartate + S-adenosyl-L-methionine = [protein]-L-isoaspartate alpha-methyl ester + S-adenosyl-L-homocysteine. Functionally, catalyzes the methyl esterification of L-isoaspartyl residues in peptides and proteins that result from spontaneous decomposition of normal L-aspartyl and L-asparaginyl residues. It plays a role in the repair and/or degradation of damaged proteins. This chain is Protein-L-isoaspartate O-methyltransferase, found in Chromohalobacter salexigens (strain ATCC BAA-138 / DSM 3043 / CIP 106854 / NCIMB 13768 / 1H11).